A 1061-amino-acid polypeptide reads, in one-letter code: Atrial natriuretic peptide receptor 1 (1061 aa).

The N-terminal stretch at 1–32 is a signal peptide; the sequence is MPGPRRPAGSRLRLLLLLLLPPLLLLLRGSHA. Over 33 to 473 the chain is Extracellular; sequence GNLTVAVVLP…CNQDHLSTLE (441 aa). N-linked (GlcNAc...) asparagine glycosylation is found at Asn34 and Asn45. Chloride is bound by residues Ser85, Gly117, and Cys118. Intrachain disulfides connect Cys92–Cys118 and Cys196–Cys245. N-linked (GlcNAc...) asparagine glycans are attached at residues Asn212, Asn338, Asn379, Asn386, and Asn427. A disulfide bridge links Cys455 with Cys464. A helical transmembrane segment spans residues 474–494; sequence VLALVGSLSLLGILIVSFFIY. Residues 495–1061 lie on the Cytoplasmic side of the membrane; the sequence is RKMQLEKELA…LGERGSSTRG (567 aa). Phosphoserine is present on residues Ser519 and Ser529. One can recognise a Protein kinase domain in the interval 528–805; that stretch reads GSRLTLSGRG…QIRLTLRKFN (278 aa). Thr532 carries the post-translational modification Phosphothreonine. 3 positions are modified to phosphoserine: Ser534, Ser538, and Ser542. Thr545 carries the post-translational modification Phosphothreonine. One can recognise a Guanylate cyclase domain in the interval 876 to 1006; the sequence is TIYFSDIVGF…DTVNTASRME (131 aa).

It belongs to the adenylyl cyclase class-4/guanylyl cyclase family. As to quaternary structure, homodimer. In terms of processing, phosphorylation of the protein kinase-like domain is required for full activation by ANP.

The protein resides in the membrane. It catalyses the reaction GTP = 3',5'-cyclic GMP + diphosphate. Receptor for the atrial natriuretic peptide NPPA/ANP and the brain natriuretic peptide NPPB/BNP which are potent vasoactive hormones playing a key role in cardiovascular homeostasis. Plays an essential role in the regulation of endothelial cell senescence and vascular aging. Upon activation by ANP or BNP, stimulates the production of cyclic guanosine monophosphate (cGMP) that promotes vascular tone and volume homeostasis by activation of protein kinase cGMP-dependent 1/PRKG1 and subsequently PRKAA1, thereby controlling blood pressure and maintaining cardiovascular homeostasis. The chain is Atrial natriuretic peptide receptor 1 from Homo sapiens (Human).